Here is a 147-residue protein sequence, read N- to C-terminus: Hemoglobin subunit epsilon (147 aa).

In terms of domain architecture, Globin spans 3 to 147 (HFTAEEKATI…VATALAHKYH (145 aa)). Phosphoserine is present on residues Ser-14 and Ser-51. Residues His-64 and His-93 each contribute to the heme b site.

The protein belongs to the globin family. Heterotetramer of two alpha chains and two epsilon chains in early embryonic hemoglobin Gower-2; two zeta chains and two epsilon chains in early embryonic hemoglobin Gower-1. As to expression, red blood cells.

Its function is as follows. The epsilon chain is a beta-type chain of early mammalian embryonic hemoglobin. The polypeptide is Hemoglobin subunit epsilon (HBE1) (Daubentonia madagascariensis (Aye-aye)).